Here is a 538-residue protein sequence, read N- to C-terminus: Thermosome subunit beta (538 aa).

Residues Ser-518–Met-538 form a disordered region. The span at Glu-528–Met-538 shows a compositional bias: gly residues.

Belongs to the TCP-1 chaperonin family. Forms a Heterooligomeric complex of two stacked eight-membered rings.

Molecular chaperone; binds unfolded polypeptides in vitro, and has a weak ATPase activity. In Methanothermobacter thermautotrophicus (strain ATCC 29096 / DSM 1053 / JCM 10044 / NBRC 100330 / Delta H) (Methanobacterium thermoautotrophicum), this protein is Thermosome subunit beta (thsB).